The following is a 238-amino-acid chain: MTSYWNFDFYLSPPQPCSYLPDQTATNLFADPEAAMDIARYSTLVRLGFRRSGRLVYRPRCLHCSACQPARIPVAQFRPNRSQRRAWKFNQDLSACYRPVEFRAEHFDLFRRYLGTRHPQGGMDDSTPEDYLNFIASGWNETSLIEFRDGKEQLLAVAAVDALTDGLSAVYSFFDPNAKKRSLGTYIILWEIGEAKALNLPYVYLGYWIKNSHKMSYKSAFHPLEVYQDKKWSILKET.

The protein belongs to the R-transferase family. Bpt subfamily.

It is found in the cytoplasm. The catalysed reaction is N-terminal L-glutamyl-[protein] + L-leucyl-tRNA(Leu) = N-terminal L-leucyl-L-glutamyl-[protein] + tRNA(Leu) + H(+). It carries out the reaction N-terminal L-aspartyl-[protein] + L-leucyl-tRNA(Leu) = N-terminal L-leucyl-L-aspartyl-[protein] + tRNA(Leu) + H(+). Its function is as follows. Functions in the N-end rule pathway of protein degradation where it conjugates Leu from its aminoacyl-tRNA to the N-termini of proteins containing an N-terminal aspartate or glutamate. The sequence is that of Aspartate/glutamate leucyltransferase from Nitrosococcus oceani (strain ATCC 19707 / BCRC 17464 / JCM 30415 / NCIMB 11848 / C-107).